The sequence spans 531 residues: Peroxinectin A (531 aa).

Residues 1–21 (MRLNLISFFIIFTILVSISNS) form the signal peptide. An N-linked (GlcNAc...) asparagine glycan is attached at asparagine 62. The Proton acceptor role is filled by histidine 101. Residues asparagine 131 and asparagine 338 are each glycosylated (N-linked (GlcNAc...) asparagine).

The protein belongs to the peroxidase family.

Its subcellular location is the secreted. The catalysed reaction is 2 a phenolic donor + H2O2 = 2 a phenolic radical donor + 2 H2O. The sequence is that of Peroxinectin A (poxA) from Dictyostelium discoideum (Social amoeba).